Reading from the N-terminus, the 288-residue chain is Quinate/shikimate dehydrogenase (288 aa).

Residues Lys71 and Asp107 each contribute to the substrate site. Residues 132-135 (AGGA), 155-158 (NRRD), Lys205, 232-235 (CVYN), and Gly255 contribute to the NAD(+) site.

It belongs to the shikimate dehydrogenase family. As to quaternary structure, homodimer.

The catalysed reaction is L-quinate + NAD(+) = 3-dehydroquinate + NADH + H(+). The enzyme catalyses L-quinate + NADP(+) = 3-dehydroquinate + NADPH + H(+). It catalyses the reaction shikimate + NADP(+) = 3-dehydroshikimate + NADPH + H(+). It carries out the reaction shikimate + NAD(+) = 3-dehydroshikimate + NADH + H(+). The protein operates within metabolic intermediate biosynthesis; chorismate biosynthesis; chorismate from D-erythrose 4-phosphate and phosphoenolpyruvate: step 4/7. The actual biological function of YdiB remains unclear, nor is it known whether 3-dehydroshikimate or quinate represents the natural substrate. Catalyzes the reversible NAD-dependent reduction of both 3-dehydroshikimate (DHSA) and 3-dehydroquinate to yield shikimate (SA) and quinate, respectively. It can use both NAD or NADP for catalysis, however it has higher catalytic efficiency with NAD. This Escherichia coli O81 (strain ED1a) protein is Quinate/shikimate dehydrogenase.